The chain runs to 98 residues: Integration host factor subunit alpha (98 aa).

Residues 49 to 71 (FGNFDLRDKNQRPGRNPKTGEDI) are disordered.

The protein belongs to the bacterial histone-like protein family. As to quaternary structure, heterodimer of an alpha and a beta chain.

This protein is one of the two subunits of integration host factor, a specific DNA-binding protein that functions in genetic recombination as well as in transcriptional and translational control. The protein is Integration host factor subunit alpha of Shewanella sp. (strain ANA-3).